The sequence spans 137 residues: Nucleoside diphosphate kinase (137 aa).

Positions 9, 57, 85, 91, and 102 each coordinate ATP. The active-site Pros-phosphohistidine intermediate is H119.

Belongs to the NDK family. In terms of assembly, homotetramer. The cofactor is Mg(2+).

Its subcellular location is the cytoplasm. It carries out the reaction a 2'-deoxyribonucleoside 5'-diphosphate + ATP = a 2'-deoxyribonucleoside 5'-triphosphate + ADP. The enzyme catalyses a ribonucleoside 5'-diphosphate + ATP = a ribonucleoside 5'-triphosphate + ADP. Functionally, major role in the synthesis of nucleoside triphosphates other than ATP. The ATP gamma phosphate is transferred to the NDP beta phosphate via a ping-pong mechanism, using a phosphorylated active-site intermediate. This Streptococcus thermophilus (strain CNRZ 1066) protein is Nucleoside diphosphate kinase.